A 72-amino-acid chain; its full sequence is PAMP-induced secreted peptide 1 (72 aa).

Residues 1–30 (MRRVSWSTVLIVVVMVSLFFVEHVVVPAAA) form the signal peptide. Proline 65 and proline 67 each carry 4-hydroxyproline.

In terms of processing, contains 4-hydroxyproline; hydroxylated on Pro-65 and Pro-67. As to expression, expressed in guard cells, hydathodes, leaf trichomes, and vascular tissues of leaves and roots.

The protein resides in the secreted. It is found in the extracellular space. The protein localises to the apoplast. Endogenous secreted peptide that acts as elicitor of immune response and positive regulator of defense response. Amplifies the immune response triggered by flg22, the active epitope of bacterial flagellin. Acts as a negative regulator of root growth. The protein is PAMP-induced secreted peptide 1 of Arabidopsis thaliana (Mouse-ear cress).